Consider the following 768-residue polypeptide: UPF0313 protein VV2143 (768 aa).

Residues 363 to 640 form the Radical SAM core domain; the sequence is AYDMIKTSVN…LHKALLRYHD (278 aa). 3 residues coordinate [4Fe-4S] cluster: C377, C381, and C384. The disordered stretch occupies residues 674-768; it reads DARTPAQRRK…GGRNQPSRAR (95 aa). Over residues 679–689 the composition is skewed to basic residues; sequence AQRRKSGRHGA. Residues 719–731 are compositionally biased toward polar residues; that stretch reads GGQSNSAPSRSGS.

The protein belongs to the UPF0313 family. [4Fe-4S] cluster serves as cofactor.

In Vibrio vulnificus (strain YJ016), this protein is UPF0313 protein VV2143.